Reading from the N-terminus, the 329-residue chain is Sideroflexin (329 aa).

Helical transmembrane passes span 95–115, 147–167, 183–203, 238–258, and 274–294; these read AFLPINVIICAGLILPNASIG, ILEAYASAVGISCSLAVGLGW, LRMMVPFTAVTSAGIANVLIM, FSRAATSFPALLLPPIVMGLF, and LNLAVIAAIFNTSLPAAIALF.

The protein belongs to the sideroflexin family.

The protein localises to the mitochondrion membrane. Its function is as follows. Mitochondrial amino-acid transporter that mediates transport of serine into mitochondria. In Dictyostelium discoideum (Social amoeba), this protein is Sideroflexin.